Here is a 487-residue protein sequence, read N- to C-terminus: Kynureninase 1 (487 aa).

Residues Leu-147, Thr-148, 175 to 178 (FPSD), Ser-232, Asp-261, His-264, and Tyr-286 contribute to the pyridoxal 5'-phosphate site. The residue at position 287 (Lys-287) is an N6-(pyridoxal phosphate)lysine. 2 residues coordinate pyridoxal 5'-phosphate: Trp-327 and Asn-355.

Belongs to the kynureninase family. As to quaternary structure, homodimer. Pyridoxal 5'-phosphate serves as cofactor.

The protein localises to the cytoplasm. It carries out the reaction L-kynurenine + H2O = anthranilate + L-alanine + H(+). The catalysed reaction is 3-hydroxy-L-kynurenine + H2O = 3-hydroxyanthranilate + L-alanine + H(+). It functions in the pathway amino-acid degradation; L-kynurenine degradation; L-alanine and anthranilate from L-kynurenine: step 1/1. Its pathway is cofactor biosynthesis; NAD(+) biosynthesis; quinolinate from L-kynurenine: step 2/3. Functionally, catalyzes the cleavage of L-kynurenine (L-Kyn) and L-3-hydroxykynurenine (L-3OHKyn) into anthranilic acid (AA) and 3-hydroxyanthranilic acid (3-OHAA), respectively. This chain is Kynureninase 1 (bna5-1), found in Aspergillus oryzae (strain ATCC 42149 / RIB 40) (Yellow koji mold).